The sequence spans 288 residues: MKPSGEDQAALAAGPWEECFQAAVQLALRAGQIIRKALTEEKRVSTKTSAADLVTETDHLVEDLIISELRERFPSHRFIAEEAAASGAKCVLTHSPTWIIDPIDGTCNFVHRFPTVAVSIGFAVRQELEFGVIYHCTEERLYTGRRGRGAFCNGQRLRVSGETDLSKALVLTEIGPKRDPATLKLFLSNMERLLHAKAHGVRVIGSSTLALCHLASGAADAYYQFGLHCWDLAAATVIIREAGGIVIDTSGGPLDLMACRVVAASTREMAMLIAQALQTINYGRDDEK.

4 residues coordinate Mg(2+): Glu-81, Asp-101, Ile-103, and Asp-104. Glu-81 contributes to the substrate binding site. Substrate contacts are provided by residues 103-106 (IDGT), 205-207 (GSS), Gln-224, and Asp-231. Residue Asp-231 coordinates Mg(2+).

The protein belongs to the inositol monophosphatase superfamily. As to quaternary structure, homodimer. Mg(2+) serves as cofactor.

The protein resides in the cytoplasm. The enzyme catalyses a myo-inositol phosphate + H2O = myo-inositol + phosphate. The catalysed reaction is 1D-myo-inositol 1-phosphate + H2O = myo-inositol + phosphate. It carries out the reaction 1D-myo-inositol 2-phosphate + H2O = myo-inositol + phosphate. It catalyses the reaction 1D-myo-inositol 3-phosphate + H2O = myo-inositol + phosphate. The enzyme catalyses 1D-myo-inositol 4-phosphate + H2O = myo-inositol + phosphate. The catalysed reaction is 1D-myo-inositol 5-phosphate + H2O = myo-inositol + phosphate. It carries out the reaction 1D-myo-inositol 6-phosphate + H2O = myo-inositol + phosphate. It catalyses the reaction alpha-D-glucose 1-phosphate + H2O = D-glucose + phosphate. The enzyme catalyses glycerol 2-phosphate + H2O = glycerol + phosphate. The catalysed reaction is adenosine 2'-phosphate + H2O = adenosine + phosphate. Its pathway is polyol metabolism; myo-inositol biosynthesis; myo-inositol from D-glucose 6-phosphate: step 2/2. With respect to regulation, inhibited by high Li(+) and restricted Mg(2+) concentrations. In terms of biological role, phosphatase that can use myo-inositol monophosphates, myo-inositol 1,4-diphosphate, scyllo-inositol-1,4-diphosphate, glucose-1-phosphate, beta-glycerophosphate and 2'-AMP as substrates in vitro. It is likely that IMPA2 has an as yet unidentified in vivo substrate(s). Has been implicated as the pharmacological target for lithium (Li(+)) action in brain. In Homo sapiens (Human), this protein is Inositol monophosphatase 2.